An 86-amino-acid polypeptide reads, in one-letter code: Small ribosomal subunit protein bS16 (86 aa).

Belongs to the bacterial ribosomal protein bS16 family.

In Xylella fastidiosa (strain M23), this protein is Small ribosomal subunit protein bS16.